A 292-amino-acid chain; its full sequence is Small ribosomal subunit protein uS2 (292 aa).

The disordered stretch occupies residues 230–292; sequence RSGGAPGSEK…KKEAGSGEEA (63 aa). 2 stretches are compositionally biased toward basic and acidic residues: residues 247–259 and 271–292; these read EWER…KTEA and PAKE…GEEA.

This sequence belongs to the universal ribosomal protein uS2 family.

This is Small ribosomal subunit protein uS2 from Thermobifida fusca (strain YX).